A 515-amino-acid chain; its full sequence is ATP synthase subunit alpha (515 aa).

ATP is bound at residue 169 to 176; it reads GDRQTGKT.

It belongs to the ATPase alpha/beta chains family. F-type ATPases have 2 components, CF(1) - the catalytic core - and CF(0) - the membrane proton channel. CF(1) has five subunits: alpha(3), beta(3), gamma(1), delta(1), epsilon(1). CF(0) has three main subunits: a(1), b(2) and c(9-12). The alpha and beta chains form an alternating ring which encloses part of the gamma chain. CF(1) is attached to CF(0) by a central stalk formed by the gamma and epsilon chains, while a peripheral stalk is formed by the delta and b chains.

The protein localises to the cell inner membrane. The enzyme catalyses ATP + H2O + 4 H(+)(in) = ADP + phosphate + 5 H(+)(out). In terms of biological role, produces ATP from ADP in the presence of a proton gradient across the membrane. The alpha chain is a regulatory subunit. This Neisseria meningitidis serogroup A / serotype 4A (strain DSM 15465 / Z2491) protein is ATP synthase subunit alpha.